The following is a 336-amino-acid chain: Tyrosine recombinase XerC (336 aa).

The Core-binding (CB) domain occupies 14–106 (VARCRWLEPF…SVKSFYRFLL (93 aa)). Residues 127–330 (KVPRFVSEEE…TFSRLKEIYD (204 aa)) form the Tyr recombinase domain. Catalysis depends on residues arginine 183, lysine 207, histidine 282, arginine 285, and histidine 308. The active-site O-(3'-phospho-DNA)-tyrosine intermediate is the tyrosine 317.

This sequence belongs to the 'phage' integrase family. XerC subfamily. As to quaternary structure, forms a cyclic heterotetrameric complex composed of two molecules of XerC and two molecules of XerD.

The protein localises to the cytoplasm. Functionally, site-specific tyrosine recombinase, which acts by catalyzing the cutting and rejoining of the recombining DNA molecules. The XerC-XerD complex is essential to convert dimers of the bacterial chromosome into monomers to permit their segregation at cell division. It also contributes to the segregational stability of plasmids. This is Tyrosine recombinase XerC from Chlorobaculum parvum (strain DSM 263 / NCIMB 8327) (Chlorobium vibrioforme subsp. thiosulfatophilum).